Consider the following 96-residue polypeptide: Bublin coiled-coil protein (96 aa).

The stretch at Asn39–Ala79 forms a coiled coil. The tract at residues Asn63 to Asp96 is disordered. Over residues Pro87 to Asp96 the composition is skewed to basic and acidic residues.

Belongs to the UPF0184 (EST00098) family.

The protein resides in the cell junction. It localises to the cytoplasm. The protein localises to the cytoskeleton. Its function is as follows. Essential for intermediate filament organization in intestinal cells, interacts with intermediate filament and regulates intestinal lumen morphology. The protein is Bublin coiled-coil protein (bbln) of Ctenopharyngodon idella (Grass carp).